We begin with the raw amino-acid sequence, 557 residues long: Jerky protein (557 aa).

In terms of domain architecture, HTH psq-type spans K11–L62. 2 consecutive DNA-binding regions (H-T-H motif) follow at residues R38 to H58 and P110 to R142. The 73-residue stretch at Q77 to D149 folds into the HTH CENPB-type domain. In terms of domain architecture, DDE-1 spans K213 to W382.

It belongs to the tigger transposable element derived protein family. In terms of tissue distribution, brain; highest in the temporal and brainstem regions.

It localises to the nucleus. Functionally, may bind DNA. The chain is Jerky protein from Mus musculus (Mouse).